The chain runs to 309 residues: Mitochondrial brown fat uncoupling protein 1 (309 aa).

Over 2 to 10 the chain is Mitochondrial intermembrane; that stretch reads VGHTESDVP. The helical transmembrane segment at 11-32 threads the bilayer; the sequence is PTMAVKIFSAGVAACVADIITF. 3 Solcar repeats span residues 11 to 106, 113 to 203, and 212 to 297; these read PTMA…VQEF, ASLG…MKEA, and DDVP…LKQE. Residues 33–77 lie on the Mitochondrial matrix side of the membrane; the sequence is PLDTAKVRLQVGSAIQGECLISSAIRYKGVLGTIITLAKTEGPVK. Lysine 60 contacts fatty acid 16:0. Residues 78–100 form a helical membrane-spanning segment; it reads LYSGLPAGLQRQISFASLRIGLY. Residues 101-118 are Mitochondrial intermembrane-facing; sequence DTVQEFFTTGKEASLGSK. A helical transmembrane segment spans residues 119 to 135; it reads ISAGLMTGGVAVFIGQP. Topologically, residues 136 to 180 are mitochondrial matrix; that stretch reads TEVVKVRLQAQSHLHGPKPRYTGTYNAYRIIATTEGLTGLWKGTT. Residues 181–197 form a helical membrane-spanning segment; the sequence is PNLTRNVIINCTELVTY. Residues 198–214 lie on the Mitochondrial intermembrane side of the membrane; it reads DLMKEALVKNKLLADDV. The chain crosses the membrane as a helical span at residues 215–234; that stretch reads PCHFVSAVVAGFCTTVLSSP. The Mitochondrial matrix segment spans residues 235-268; that stretch reads VDVVKTRFVNSSPGQYTSVPNCAMMMLTREGPSA. Cysteine 256 is modified (cysteine sulfenic acid (-SOH)). The helical transmembrane segment at 269 to 291 threads the bilayer; that stretch reads FFKGFVPSFLRLGSWNIIMFVCF. Lysine 271 contributes to the fatty acid 16:0 binding site. The Mitochondrial intermembrane segment spans residues 292–309; sequence EQLKQELMKSRHTMDCAT.

This sequence belongs to the mitochondrial carrier (TC 2.A.29) family. Most probably functions as a monomer. Binds one purine nucleotide per monomer. However, has also been suggested to function as a homodimer or a homotetramer. Tightly associates with cardiolipin in the mitochondrion inner membrane; may stabilize and regulate its activity. Post-translationally, may undergo sulfenylation upon cold exposure. May increase the sensitivity of UCP1 thermogenic function to the activation by noradrenaline probably through structural effects. In terms of processing, may undergo ubiquitin-mediated proteasomal degradation.

The protein resides in the mitochondrion inner membrane. It carries out the reaction H(+)(in) = H(+)(out). Has no constitutive proton transporter activity and has to be activated by long-chain fatty acids/LCFAs. Inhibited by purine nucleotides. Both purine nucleotides and LCFAs bind the cytosolic side of the transporter and directly compete to activate or inhibit it. Activated by noradrenaline and reactive oxygen species. Despite lacking canonical translational encoding for selenocysteine, a small pool of the protein has been observed to selectively incorporate selenocysteine at 'Cys-256'. Selenocysteine-modified protein is highly sensitive to redox modification and may constitute a pool of protein highly sensitive to activation by elevated levels of reactive oxygen species (ROS). In terms of biological role, mitochondrial protein responsible for thermogenic respiration, a specialized capacity of brown adipose tissue and beige fat that participates in non-shivering adaptive thermogenesis to temperature and diet variations and more generally to the regulation of energy balance. Functions as a long-chain fatty acid/LCFA and proton symporter, simultaneously transporting one LCFA and one proton through the inner mitochondrial membrane. However, LCFAs remaining associated with the transporter via their hydrophobic tails, it results in an apparent transport of protons activated by LCFAs. Thereby, dissipates the mitochondrial proton gradient and converts the energy of substrate oxydation into heat instead of ATP. Regulates the production of reactive oxygen species/ROS by mitochondria. This chain is Mitochondrial brown fat uncoupling protein 1, found in Bos taurus (Bovine).